The sequence spans 505 residues: Maturase K (505 aa).

The protein belongs to the intron maturase 2 family. MatK subfamily.

The protein resides in the plastid. It localises to the chloroplast. Usually encoded in the trnK tRNA gene intron. Probably assists in splicing its own and other chloroplast group II introns. This chain is Maturase K, found in Elaeagnus umbellata (Autumn olive).